Consider the following 152-residue polypeptide: Putative toxin MJ1304 (152 aa).

The 121-residue stretch at 15 to 135 (IKRAEEDLEV…EECLKDAENV (121 aa)) folds into the HEPN domain.

Its function is as follows. Putative toxin component of a putative type VII toxin-antitoxin (TA) system. Its cognate antitoxin might be MJ1305. This chain is Putative toxin MJ1304, found in Methanocaldococcus jannaschii (strain ATCC 43067 / DSM 2661 / JAL-1 / JCM 10045 / NBRC 100440) (Methanococcus jannaschii).